The following is a 77-amino-acid chain: uncharacterized protein (77 aa).

The helical transmembrane segment at 13–33 threads the bilayer; sequence VPVIRLSVFLHFFFVFPFCLL.

It localises to the membrane. This is an uncharacterized protein from Saccharomyces cerevisiae (strain ATCC 204508 / S288c) (Baker's yeast).